A 319-amino-acid chain; its full sequence is Acetyl esterase (319 aa).

The short motif at 91 to 93 is the Involved in the stabilization of the negatively charged intermediate by the formation of the oxyanion hole element; that stretch reads HGG. Catalysis depends on residues Ser165, Asp262, and His292.

This sequence belongs to the 'GDXG' lipolytic enzyme family. As to quaternary structure, homodimer. Interacts with MalT and MelA.

It localises to the cytoplasm. Functionally, displays esterase activity towards short chain fatty esters (acyl chain length of up to 8 carbons). Able to hydrolyze triacetylglycerol (triacetin) and tributyrylglycerol (tributyrin), but not trioleylglycerol (triolein) or cholesterol oleate. Negatively regulates MalT activity by antagonizing maltotriose binding. Inhibits MelA galactosidase activity. The polypeptide is Acetyl esterase (Shigella boydii serotype 4 (strain Sb227)).